A 321-amino-acid chain; its full sequence is Outer envelope protein 36, chloroplastic (321 aa).

It belongs to the OEP80 (TC 1.B.33.2) family. As to expression, expressed in germinating seeds.

The protein localises to the plastid. The protein resides in the chloroplast outer membrane. Functionally, may play a role during plastid development. The sequence is that of Outer envelope protein 36, chloroplastic from Arabidopsis thaliana (Mouse-ear cress).